The chain runs to 370 residues: Phospho-N-acetylmuramoyl-pentapeptide-transferase (370 aa).

The next 11 helical transmembrane spans lie at 21–41 (PTSI…DLFI), 46–66 (LLVP…WGII), 92–112 (PSMG…LFAL), 117–137 (FSKQ…IGLI), 151–171 (LSVK…LVLI), 181–201 (ILIF…IALF), 217–237 (DGLA…ELII), 243–263 (NYAI…FLIF), 270–290 (VFMG…VALL), 298–318 (LIMG…VGVF), and 349–369 (TIIV…AIML).

This sequence belongs to the glycosyltransferase 4 family. MraY subfamily. Mg(2+) is required as a cofactor.

It localises to the cell inner membrane. It catalyses the reaction UDP-N-acetyl-alpha-D-muramoyl-L-alanyl-gamma-D-glutamyl-meso-2,6-diaminopimeloyl-D-alanyl-D-alanine + di-trans,octa-cis-undecaprenyl phosphate = di-trans,octa-cis-undecaprenyl diphospho-N-acetyl-alpha-D-muramoyl-L-alanyl-D-glutamyl-meso-2,6-diaminopimeloyl-D-alanyl-D-alanine + UMP. It participates in cell wall biogenesis; peptidoglycan biosynthesis. Its function is as follows. Catalyzes the initial step of the lipid cycle reactions in the biosynthesis of the cell wall peptidoglycan: transfers peptidoglycan precursor phospho-MurNAc-pentapeptide from UDP-MurNAc-pentapeptide onto the lipid carrier undecaprenyl phosphate, yielding undecaprenyl-pyrophosphoryl-MurNAc-pentapeptide, known as lipid I. The polypeptide is Phospho-N-acetylmuramoyl-pentapeptide-transferase (Prochlorococcus marinus (strain SARG / CCMP1375 / SS120)).